The following is a 94-amino-acid chain: Scorpine-like-1 (94 aa).

Positions 1–18 (MNTKFTVLIFLGVIVVSY) are cleaved as a signal peptide. Residues 54–94 (EYGCMMDISWNKDCQRHCQSTEQKDGICHGMKCKCGKPRSY) enclose the BetaSPN-type CS-alpha/beta domain. Intrachain disulfides connect cysteine 57–cysteine 81, cysteine 67–cysteine 86, and cysteine 71–cysteine 88.

It belongs to the long chain scorpion toxin family. Class 3 subfamily. As to expression, expressed by the venom gland.

It is found in the secreted. In terms of biological role, has antibacterial activity. The polypeptide is Scorpine-like-1 (Urodacus yaschenkoi (Inland robust scorpion)).